The chain runs to 395 residues: Probable sugar efflux transporter (395 aa).

The next 12 membrane-spanning stretches (helical) occupy residues 13–33 (VVSLSLAAFIFNTAEFAPVAL), 48–68 (VGLIITIYAWVVGLMSLPCML), 82–102 (IFILFAISNVLSGLAWNYWVL), 107–127 (IGVALSHAVFWSITASLVVRL), 134–154 (AQALSLLATGTALALVLGLPL), 168–188 (FVLIGLIAAVIMVGLMKLLPV), 207–227 (PALLCVYGLTVMIVTAHFTAY), 244–264 (FTTILLLIFGGAGIIGSMLFS), 272–292 (AGFLIVSFAFLAVCLLLLLPL), 297–317 (WSLSTLCIVWGIAIMALSLGM), 331–351 (VAMALYSGIYNIGIGGGALLG), and 363–383 (IGYMGAAMAILATVCCIFTFV).

Belongs to the major facilitator superfamily. SotB (TC 2.A.1.2) family.

Its subcellular location is the cell inner membrane. Involved in the efflux of sugars. The physiological role may be the reduction of the intracellular concentration of toxic sugars or sugar metabolites. The polypeptide is Probable sugar efflux transporter (Pectobacterium atrosepticum (strain SCRI 1043 / ATCC BAA-672) (Erwinia carotovora subsp. atroseptica)).